A 966-amino-acid polypeptide reads, in one-letter code: Dynamin-like GTPase OPA1, mitochondrial (966 aa).

A mitochondrion-targeting transit peptide spans 1-86 (MLRAGSVVTC…GGHGYQQHRT (86 aa)). Topologically, residues 87–95 (FWVARLAAR) are mitochondrial matrix. The helical transmembrane segment at 96-112 (LLKLRYILLGSAVGGGY) threads the bilayer. Topologically, residues 113-776 (TAKKTYDEWK…SVIADMVGPD (664 aa)) are mitochondrial intermembrane. The segment at 189–217 (ESALRAPDVPPASAAMADSGDKQFKKSSD) is disordered. Basic and acidic residues predominate over residues 207 to 217 (SGDKQFKKSSD). Residues 213–259 (KKSSDKEKVDQLQEELLRTQLKYQRMLERLEKENKELRKVVLQKDDK) adopt a coiled-coil conformation. Positions 291–567 (QDHLPRVVVV…FWKMVRESVE (277 aa)) constitute a Dynamin-type G domain. The G1 motif stretch occupies residues 301–308 (GDQSAGKT). GTP contacts are provided by Ser-304, Gly-306, Lys-307, Thr-308, Ser-309, and Gly-323. Thr-308 serves as a coordination point for Mg(2+). Positions 327–330 (MMTR) are G2 motif. Mg(2+)-binding residues include Thr-329 and Asp-404. The tract at residues 404–407 (DLPG) is G3 motif. The tract at residues 473-476 (TKVD) is G4 motif. GTP-binding residues include Lys-474, Asp-476, and Thr-509. The interval 507–510 (VVTG) is G5 motif. 2 stalk region regions span residues 595-842 (DRNE…IKDT) and 880-934 (CNDV…VQLI). Positions 742–862 (TDKPQWDAAI…QKALLHCNLC (121 aa)) are paddle region. The stretch at 777 to 787 (WKQRWMSWKNR) is an intramembrane region. Topologically, residues 788-966 (TPEQHTRNET…AFIEALHKEK (179 aa)) are mitochondrial intermembrane. Cys-862 and Cys-880 are disulfide-bonded. A coiled-coil region spans residues 901 to 966 (RQQLTNTEVR…AFIEALHKEK (66 aa)).

The protein belongs to the TRAFAC class dynamin-like GTPase superfamily. Dynamin/Fzo/YdjA family. Oligomeric complex consisting of membrane-bound and soluble forms of OPA1. Post-translationally, cleaved by OMA1 or YME1L downstream of the transmembrane region in response to different signals to generate soluble forms. Cleaved by OMA1 at position S1 following stress conditions, generating the short soluble form (Dynamin-like GTPase OPA1, short form; S-OPA1).

Its subcellular location is the mitochondrion inner membrane. It is found in the mitochondrion intermembrane space. It catalyses the reaction GTP + H2O = GDP + phosphate + H(+). Functionally, dynamin-related GTPase that is essential for normal mitochondrial morphology by mediating fusion of the mitochondrial inner membranes, regulating cristae morphology and maintaining respiratory chain function. Exists in two forms: the transmembrane, long form (Dynamin-like GTPase OPA1, long form; L-OPA1), which is tethered to the inner mitochondrial membrane, and the short soluble form (Dynamin-like GTPase OPA1, short form; S-OPA1), which results from proteolytic cleavage and localizes in the intermembrane space. Both forms (L-OPA1 and S-OPA1) cooperate to catalyze the fusion of the mitochondrial inner membrane. The equilibrium between L-OPA1 and S-OPA1 is essential: excess levels of S-OPA1, produced by cleavage by OMA1 following loss of mitochondrial membrane potential, lead to an impaired equilibrium between L-OPA1 and S-OPA1, inhibiting mitochondrial fusion. The balance between L-OPA1 and S-OPA1 also influences cristae shape and morphology. Its role in mitochondrial morphology is required for mitochondrial genome maintenance. Constitutes the transmembrane long form (L-OPA1) that plays a central role in mitochondrial inner membrane fusion and cristae morphology. L-OPA1 and the soluble short form (S-OPA1) form higher-order helical assemblies that coordinate the fusion of mitochondrial inner membranes. Inner membrane-anchored L-OPA1 molecules initiate membrane remodeling by recruiting soluble S-OPA1 to rapidly polymerize into a flexible cylindrical scaffold encaging the mitochondrial inner membrane. Once at the membrane surface, the formation of S-OPA1 helices induce bilayer curvature. OPA1 dimerization through the paddle region, which inserts into cardiolipin-containing membrane, promotes GTP hydrolysis and the helical assembly of a flexible OPA1 lattice on the membrane, which drives membrane curvature and mitochondrial fusion. Plays a role in the maintenance and remodeling of mitochondrial cristae, some invaginations of the mitochondrial inner membrane that provide an increase in the surface area. Probably acts by forming helical filaments at the inside of inner membrane tubes with the shape and dimensions of crista junctions. Its function is as follows. Constitutes the soluble short form (S-OPA1) generated by cleavage by OMA1, which plays a central role in mitochondrial inner membrane fusion and cristae morphology. The transmembrane long form (L-OPA1) and the S-OPA1 form higher-order helical assemblies that coordinate the fusion of mitochondrial inner membranes. Inner membrane-anchored L-OPA1 molecules initiate membrane remodeling by recruiting soluble S-OPA1 to rapidly polymerize into a flexible cylindrical scaffold encaging the mitochondrial inner membrane. Once at the membrane surface, the formation of S-OPA1 helices induce bilayer curvature. OPA1 dimerization through the paddle region, which inserts into cardiolipin-containing membrane, promotes GTP hydrolysis and the helical assembly of a flexible OPA1 lattice on the membrane, which drives membrane curvature and mitochondrial fusion. Excess levels of S-OPA1 produced by cleavage by OMA1 following stress conditions that induce loss of mitochondrial membrane potential, lead to an impaired equilibrium between L-OPA1 and S-OPA1, thereby inhibiting mitochondrial fusion. Plays a role in the maintenance and remodeling of mitochondrial cristae, some invaginations of the mitochondrial inner membrane that provide an increase in the surface area. Probably acts by forming helical filaments at the inside of inner membrane tubes with the shape and dimensions of crista junctions. This chain is Dynamin-like GTPase OPA1, mitochondrial, found in Danio rerio (Zebrafish).